The sequence spans 480 residues: MSVVTRIAPSPTGDPHVGTAYIGLFNHTLAQQARARGEEGKFILRIEDTDRNRYVPDSERRIFQMMAWLGLTPDESPLQGGPNGPYRQSERTAIYGEYARKLVEAGHAYYAFETPEELAALREAAQQEGRVIAVPSRDLDPAEAQRRVDAGESAVIRLKVPREGETVVNDALRKPIAFQNREIDDKVLLKADGYPTYHLANVVDDHLMGVTHVIRAEEWITSTPIHVLLYRAFGWAEPIFAHMPLLRNADKSKISKRKNPTSVEWYMAQGFLPEAMLNFLATMGWTHPEGKEIFDLAEFQRVFRLEDVTLGGPVFSLDKLRWMNGKYLREVLSEEEVAERLHAYLASQKHDLPDDDYFRAVVRMMIPRMDVFSEFLEKTPYFWSEDYPVSEKAQHLIEEGRPFLPELAARLKNLPSFDPATTEAALRAFAEERGLKPGKVMQPLRAAIAGTSESPGMFELLEVLGQERVVARVERAARGG.

A 'HIGH' region motif is present at residues 9 to 19 (PSPTGDPHVGT). The short motif at 253-257 (KISKR) is the 'KMSKS' region element. Lys256 contacts ATP.

It belongs to the class-I aminoacyl-tRNA synthetase family. Glutamate--tRNA ligase type 1 subfamily. As to quaternary structure, monomer.

The protein localises to the cytoplasm. It carries out the reaction tRNA(Glu) + L-glutamate + ATP = L-glutamyl-tRNA(Glu) + AMP + diphosphate. Functionally, catalyzes the attachment of glutamate to tRNA(Glu) in a two-step reaction: glutamate is first activated by ATP to form Glu-AMP and then transferred to the acceptor end of tRNA(Glu). The polypeptide is Glutamate--tRNA ligase (Deinococcus geothermalis (strain DSM 11300 / CIP 105573 / AG-3a)).